A 351-amino-acid polypeptide reads, in one-letter code: MLYSLLKKYLFSLDAEDAHEKVCKILKMLSSSPFLCNLIDSQWGYKNPKLENEILGLHFPNPLGLAAGFDKNASMLRALIAFGFGYLEAGTLTNEAQMGNERPRLFRHIEEESLQNAMGFNNHGAVLGVRSFKHFAPYKTPIGINLGKNKHIEQAHALEDYKAVLNKCLNIGDYYTFNLSSPNTPNLRDLQNKAFVNELFCMAKEMTHKPLFLKIAPDLETDDMLEIVNSAIGAGAHGIIATNTTIDKSLVFAPKEMGGLSGKCLTKKSREIFKELAKAFFNQSVLVSVGGISDAKEAYERIKMGASLLQIYSAFIYNGPNLCQNILKDLVKLLQKDGFLSVKEAIGADLR.

FMN is bound by residues 67 to 71 (AGFDK) and Thr91. A substrate-binding site is contributed by Lys71. 116–120 (NAMGF) contacts substrate. Positions 145 and 178 each coordinate FMN. A substrate-binding site is contributed by Asn178. Ser181 serves as the catalytic Nucleophile. Residue Asn183 coordinates substrate. Residues Lys214 and Thr242 each contribute to the FMN site. 243–244 (NT) serves as a coordination point for substrate. Residues Gly262, Gly291, and 312–313 (YS) contribute to the FMN site.

Belongs to the dihydroorotate dehydrogenase family. Type 2 subfamily. In terms of assembly, monomer. FMN serves as cofactor.

The protein resides in the cell membrane. The catalysed reaction is (S)-dihydroorotate + a quinone = orotate + a quinol. The protein operates within pyrimidine metabolism; UMP biosynthesis via de novo pathway; orotate from (S)-dihydroorotate (quinone route): step 1/1. Catalyzes the conversion of dihydroorotate to orotate with quinone as electron acceptor. The chain is Dihydroorotate dehydrogenase (quinone) from Helicobacter pylori (strain P12).